Consider the following 127-residue polypeptide: MEKWKERVRIGGYAIIDIGGKQLRVQPGRFYDVRHFPSNLNTRGSDTKVSMGRVLLIRDGSKIDIGSPWLANAVVKGRILHNCFEDKLVIKKIFSKRKTRGSRGCRGSIIRFAIDSIHFNCSNATNK.

It belongs to the bacterial ribosomal protein bL21 family. Part of the 50S ribosomal subunit.

It localises to the plastid. It is found in the chloroplast. In terms of biological role, this protein binds to 23S rRNA. In Adiantum capillus-veneris (Maidenhair fern), this protein is Large ribosomal subunit protein bL21c.